We begin with the raw amino-acid sequence, 474 residues long: Trehalose-6-phosphate synthase (474 aa).

Position 10 (Arg-10) interacts with D-glucose 6-phosphate. 22–23 (GG) lines the UDP-alpha-D-glucose pocket. Positions 77 and 131 each coordinate D-glucose 6-phosphate. UDP-alpha-D-glucose is bound by residues Arg-263 and Lys-268. Position 301 (Arg-301) interacts with D-glucose 6-phosphate. UDP-alpha-D-glucose contacts are provided by residues Phe-340 and 366 to 370 (LVAKE).

This sequence belongs to the glycosyltransferase 20 family. In terms of assembly, homotetramer.

It catalyses the reaction D-glucose 6-phosphate + UDP-alpha-D-glucose = alpha,alpha-trehalose 6-phosphate + UDP + H(+). It functions in the pathway glycan biosynthesis; trehalose biosynthesis. Functionally, probably involved in the osmoprotection via the biosynthesis of trehalose. Catalyzes the transfer of glucose from UDP-alpha-D-glucose (UDP-Glc) to D-glucose 6-phosphate (Glc-6-P) to form trehalose-6-phosphate. Acts with retention of the anomeric configuration of the UDP-sugar donor. The sequence is that of Trehalose-6-phosphate synthase from Escherichia coli O6:K15:H31 (strain 536 / UPEC).